The primary structure comprises 480 residues: MLGRFQPFSLVRSFRLGFEACCYPNQKCATQTIRPPDSRCLVQAVSQNFNFAKDVLDQWSQLEKDGLRGPYPALWKVSAKGEEDKWSFERMTQLSKKAASILSDTCALSHGDRLMIILPPTPEAYWICLACVRLGITFVPGSPQLTAKKIRYQLRMSKAQCIVANEAMAPVVNSAVSDCPTLKTKLLVSDKSYDGWLDFKKLIQVAPPKQTYMRTKSQDPMAIFFTKGTTGAPKMVEYSQYGLGMGFSQASRRWMDLQPTDVLWSLGDAFGGSLSLSAVLGTWFQGACVFLCHMPTFCPETVLNVLSRFPITTLSANPEMYQELLQHKCFTSYRFKSLKQCVAAGGPISPGVIEDWKRITKLDIYEGYGQTETGLLCATSKTIKLKPSSLGKPLPPYIVQIVDENSNLLPPGEEGNIAIRIKLNQPASLYCPHMVSWEEYASARGHMLYLTGDRGIMDEDGYFWWSGRVDDVANALGQRL.

The N-terminal 21 residues, 1 to 21 (MLGRFQPFSLVRSFRLGFEAC), are a transit peptide targeting the mitochondrion. Residues 226–234 (TKGTTGAPK), 366–371 (EGYGQT), Asp453, and Arg468 contribute to the ATP site.

This sequence belongs to the ATP-dependent AMP-binding enzyme family. As to quaternary structure, monomer. Mg(2+) serves as cofactor. It depends on Mn(2+) as a cofactor.

It localises to the mitochondrion. It carries out the reaction a medium-chain fatty acid + ATP + CoA = a medium-chain fatty acyl-CoA + AMP + diphosphate. Functionally, catalyzes the activation of fatty acids by CoA to produce an acyl-CoA, the first step in fatty acid metabolism. The protein is Acyl-coenzyme A synthetase ACSM6, mitochondrial (ACSM6) of Homo sapiens (Human).